We begin with the raw amino-acid sequence, 549 residues long: DDB1- and CUL4-associated factor 11 (549 aa).

Over residues 1-24 (MGSRNSSSAGSGSLEPSEGLSRRG) the composition is skewed to low complexity. A disordered region spans residues 1-40 (MGSRNSSSAGSGSLEPSEGLSRRGAGLRRSEEEEEEDEDV). A phosphoserine mark is found at serine 73 and serine 75. Positions 80-89 (DSAWDGRLGD) are enriched in basic and acidic residues. The tract at residues 80 to 100 (DSAWDGRLGDRYNPPVDATPD) is disordered. WD repeat units lie at residues 170-210 (TYSQ…HKFK), 216-258 (DVGW…TALD), 263-302 (ERRFAVFSIAVSSDGREVLGGANDGCLYVFDREQNRRTLQ), 305-345 (SHED…EDDP), 353-392 (GHQDGITFIDSKGDARYLISNSKDQTIKLWDIRRFSSREG), 435-480 (GVLH…KKLT), and 481-520 (NHKACVRDVSWHPFEEKIVSSSWDGSLRLWQYRQAEYFQD).

In terms of assembly, interacts with DDB1 and CUL4A.

It functions in the pathway protein modification; protein ubiquitination. May function as a substrate receptor for CUL4-DDB1 E3 ubiquitin-protein ligase complex. The chain is DDB1- and CUL4-associated factor 11 (Dcaf11) from Rattus norvegicus (Rat).